Here is a 301-residue protein sequence, read N- to C-terminus: Haloalkane dehalogenase (301 aa).

One can recognise an AB hydrolase-1 domain in the interval 47-284 (PPIVLLHGEP…INASHFIQED (238 aa)). The active-site Nucleophile is Asp-123. Asp-250 functions as the Proton donor in the catalytic mechanism. His-279 serves as the catalytic Proton acceptor.

This sequence belongs to the haloalkane dehalogenase family. Type 1 subfamily. Monomer.

It carries out the reaction 1-haloalkane + H2O = a halide anion + a primary alcohol + H(+). Functionally, catalyzes hydrolytic cleavage of carbon-halogen bonds in halogenated aliphatic compounds, leading to the formation of the corresponding primary alcohols, halide ions and protons. The sequence is that of Haloalkane dehalogenase from Mycolicibacterium paratuberculosis (strain ATCC BAA-968 / K-10) (Mycobacterium paratuberculosis).